We begin with the raw amino-acid sequence, 85 residues long: Protein MC005 (85 aa).

In terms of assembly, interacts with host IKBKG; this interaction prevents NF-kappa-B activation.

It is found in the host cytoplasm. Plays a role in the inhibition of the host NF-kappa-B pathway by preventing ubiquitin binding-dependent regulation of host IKBKB activation by IKBKG/NEMO. This chain is Protein MC005 (MC005L), found in Molluscum contagiosum virus subtype 1 (MOCV).